The following is a 406-amino-acid chain: Purine nucleoside permease (406 aa).

A signal peptide spans methionine 1–alanine 22.

This sequence belongs to the NUP family. Post-translationally, predicted to be a substrate for cleavage by KEX2.

Mammalian nucleoside transport inhibitors dipyridamole and NBMPR inhibit adenosine transport by NUP. Its function is as follows. Nucleoside permease that transports adenosine and guanosine. Does not show any transport activities towards cytidine, adenine, guanine, uridine, and uracil. This Candida albicans (strain SC5314 / ATCC MYA-2876) (Yeast) protein is Purine nucleoside permease.